A 302-amino-acid chain; its full sequence is Nudix hydrolase 5 (302 aa).

One can recognise a Nudix hydrolase domain in the interval 122 to 254; it reads SHRIGIGAFV…EGNEMFKLIA (133 aa). Residues 159 to 180 carry the Nudix box motif; that stretch reads GTIKEGESIWAGAVREVKEETD. Mg(2+) is bound by residues E174 and E178.

Belongs to the Nudix hydrolase family. Mg(2+) serves as cofactor. Mn(2+) is required as a cofactor. Expressed in roots, stems and leaves.

In terms of biological role, probably mediates the hydrolysis of some nucleoside diphosphate derivatives. This chain is Nudix hydrolase 5 (NUDT5), found in Arabidopsis thaliana (Mouse-ear cress).